The following is a 297-amino-acid chain: 4-hydroxy-tetrahydrodipicolinate synthase (297 aa).

Thr50 provides a ligand contact to pyruvate. Residue Tyr138 is the Proton donor/acceptor of the active site. The Schiff-base intermediate with substrate role is filled by Lys166. Ile208 contacts pyruvate.

This sequence belongs to the DapA family. As to quaternary structure, homotetramer; dimer of dimers.

It localises to the cytoplasm. The enzyme catalyses L-aspartate 4-semialdehyde + pyruvate = (2S,4S)-4-hydroxy-2,3,4,5-tetrahydrodipicolinate + H2O + H(+). Its pathway is amino-acid biosynthesis; L-lysine biosynthesis via DAP pathway; (S)-tetrahydrodipicolinate from L-aspartate: step 3/4. In terms of biological role, catalyzes the condensation of (S)-aspartate-beta-semialdehyde [(S)-ASA] and pyruvate to 4-hydroxy-tetrahydrodipicolinate (HTPA). This chain is 4-hydroxy-tetrahydrodipicolinate synthase, found in Haemophilus ducreyi (strain 35000HP / ATCC 700724).